Consider the following 132-residue polypeptide: Small ribosomal subunit protein uS13 (132 aa).

Basic residues predominate over residues 101 to 125 (RGLPVRGQRTKTNARTRKGPRKTVA). The segment at 101–132 (RGLPVRGQRTKTNARTRKGPRKTVANKKIETR) is disordered.

This sequence belongs to the universal ribosomal protein uS13 family. In terms of assembly, part of the 30S ribosomal subunit. Forms a loose heterodimer with protein S19. Forms two bridges to the 50S subunit in the 70S ribosome.

In terms of biological role, located at the top of the head of the 30S subunit, it contacts several helices of the 16S rRNA. In the 70S ribosome it contacts the 23S rRNA (bridge B1a) and protein L5 of the 50S subunit (bridge B1b), connecting the 2 subunits; these bridges are implicated in subunit movement. Contacts the tRNAs in the A and P-sites. The chain is Small ribosomal subunit protein uS13 from Ureaplasma parvum serovar 3 (strain ATCC 27815 / 27 / NCTC 11736).